A 117-amino-acid chain; its full sequence is Hainantoxin-XV.2 (117 aa).

Positions 1 to 20 (MKLCAVIIASLLVCAAVASS) are cleaved as a signal peptide. Residues 18 to 55 (ASSSDNQKEFAQEKEMTREETQSLGEHEKDDEVTGSEE) form a disordered region. Residues 21–56 (SDNQKEFAQEKEMTREETQSLGEHEKDDEVTGSEER) constitute a propeptide that is removed on maturation. Residues 23 to 55 (NQKEFAQEKEMTREETQSLGEHEKDDEVTGSEE) show a composition bias toward basic and acidic residues. Disulfide bonds link Cys-58-Cys-72, Cys-65-Cys-78, Cys-69-Cys-115, and Cys-71-Cys-91.

It belongs to the neurotoxin 03 (Tx2) family. 02 subfamily. HNTX-XV sub-subfamily. Expressed by the venom gland.

The protein resides in the secreted. Its function is as follows. Putative ion channel inhibitor. In Cyriopagopus hainanus (Chinese bird spider), this protein is Hainantoxin-XV.2.